The chain runs to 103 residues: Large ribosomal subunit protein uL24 (103 aa).

It belongs to the universal ribosomal protein uL24 family. As to quaternary structure, part of the 50S ribosomal subunit.

In terms of biological role, one of two assembly initiator proteins, it binds directly to the 5'-end of the 23S rRNA, where it nucleates assembly of the 50S subunit. Its function is as follows. One of the proteins that surrounds the polypeptide exit tunnel on the outside of the subunit. The protein is Large ribosomal subunit protein uL24 of Sinorhizobium fredii (strain NBRC 101917 / NGR234).